The sequence spans 513 residues: Na(+)/H(+) antiporter NhaB (513 aa).

The next 12 helical transmembrane spans lie at 23–43 (LALI…PFVA), 52–72 (IFTL…LLAI), 97–117 (LLLM…LFIF), 120–140 (LLLS…AAAF), 144–164 (FLDA…FYGI), 202–222 (LMMH…VGEP), 238–258 (FFLR…LTCL), 303–323 (AIIG…VGLI), 348–368 (TESL…AVII), 391–411 (LFYI…VGTI), 447–467 (ATPN…APLI), and 475–495 (VWMA…CVEF).

Belongs to the NhaB Na(+)/H(+) (TC 2.A.34) antiporter family.

The protein resides in the cell inner membrane. It catalyses the reaction 2 Na(+)(in) + 3 H(+)(out) = 2 Na(+)(out) + 3 H(+)(in). Na(+)/H(+) antiporter that extrudes sodium in exchange for external protons. This chain is Na(+)/H(+) antiporter NhaB, found in Shigella boydii serotype 18 (strain CDC 3083-94 / BS512).